The following is a 229-amino-acid chain: Zinc finger matrin-type protein 4 (229 aa).

4 Matrin-type zinc fingers span residues 14–44, 72–106, 145–175, and 198–228; these read SYCK…KVRL, DKNK…LKLL, RYCG…NAAR, and YRCT…NLKN.

The protein localises to the nucleus. The polypeptide is Zinc finger matrin-type protein 4 (Zmat4) (Mus musculus (Mouse)).